Here is a 1225-residue protein sequence, read N- to C-terminus: Structural maintenance of chromosomes protein 1 (1225 aa).

Position 33–40 (33–40 (GPNGSGKS)) interacts with ATP. Residues 173–489 (SGSIQYKKEY…SANNQEYDLN (317 aa)) adopt a coiled-coil conformation. An SMC hinge domain is found at 527–641 (PGVKGLVHDL…CNTLNIAKDL (115 aa)). Residues 679 to 1063 (KEEYQSLMSL…LKIKKKRKEL (385 aa)) adopt a coiled-coil conformation. The short motif at 1057 to 1061 (KKKRK) is the Nuclear localization signal element.

This sequence belongs to the SMC family. SMC1 subfamily. In terms of assembly, cohesin complexes are composed of the SMC1 and SMC3 heterodimer attached via their SMC hinge domain, MCD1/SCC1 which link them, and IRR1/SCC3, which interacts with MCD1. The cohesin complex also interacts with SCC2, which is required for its association with chromosomes.

The protein resides in the nucleus. It localises to the chromosome. Involved in chromosome cohesion during cell cycle and in DNA repair. Central component of cohesin complex. The cohesin complex is required for the cohesion of sister chromatids after DNA replication. The cohesin complex apparently forms a large proteinaceous ring within which sister chromatids can be trapped. At anaphase, the complex is cleaved and dissociates from chromatin, allowing sister chromatids to segregate. In Saccharomyces cerevisiae (strain ATCC 204508 / S288c) (Baker's yeast), this protein is Structural maintenance of chromosomes protein 1 (SMC1).